The sequence spans 645 residues: Glucans biosynthesis glucosyltransferase H (645 aa).

The tract at residues 1–28 (MDGTVTLSPAPTDLPPVSSLDAGQPTLP) is disordered. The next 7 membrane-spanning stretches (helical) occupy residues 64-84 (LIGG…SVLW), 98-118 (LFVL…AGFI), 423-443 (APMW…GAGI), 465-485 (AIWI…LGYI), 504-524 (ALSI…VMYL), 558-578 (SYGG…LVSP), and 580-600 (LAAW…VVAV).

This sequence belongs to the glycosyltransferase 2 family. OpgH subfamily.

It localises to the cell inner membrane. The protein operates within glycan metabolism; osmoregulated periplasmic glucan (OPG) biosynthesis. In terms of biological role, involved in the biosynthesis of osmoregulated periplasmic glucans (OPGs). The protein is Glucans biosynthesis glucosyltransferase H of Xanthomonas campestris pv. campestris (strain B100).